Consider the following 506-residue polypeptide: Cobyric acid synthase (506 aa).

In terms of domain architecture, GATase cobBQ-type spans 254–453; that stretch reads DLDIAVIRLP…IHGIFESDSF (200 aa). The active-site Nucleophile is Cys-334. His-445 is an active-site residue.

This sequence belongs to the CobB/CobQ family. CobQ subfamily.

It functions in the pathway cofactor biosynthesis; adenosylcobalamin biosynthesis. Functionally, catalyzes amidations at positions B, D, E, and G on adenosylcobyrinic A,C-diamide. NH(2) groups are provided by glutamine, and one molecule of ATP is hydrogenolyzed for each amidation. This is Cobyric acid synthase from Dehalococcoides mccartyi (strain ATCC BAA-2266 / KCTC 15142 / 195) (Dehalococcoides ethenogenes (strain 195)).